A 281-amino-acid chain; its full sequence is Probable endonuclease 4 (281 aa).

Residues His69, His109, Glu145, Asp179, His182, His216, Asp229, His231, and Glu261 each coordinate Zn(2+).

This sequence belongs to the AP endonuclease 2 family. Zn(2+) is required as a cofactor.

It catalyses the reaction Endonucleolytic cleavage to 5'-phosphooligonucleotide end-products.. In terms of biological role, endonuclease IV plays a role in DNA repair. It cleaves phosphodiester bonds at apurinic or apyrimidinic (AP) sites, generating a 3'-hydroxyl group and a 5'-terminal sugar phosphate. The protein is Probable endonuclease 4 of Proteus mirabilis (strain HI4320).